We begin with the raw amino-acid sequence, 141 residues long: Hemoglobin subunit alpha (141 aa).

The Globin domain occupies 1 to 141 (VLSPADKTNV…VSTVLTSKYR (141 aa)). Serine 3 is subject to Phosphoserine. Residue lysine 7 is modified to N6-succinyllysine. Threonine 8 bears the Phosphothreonine mark. Lysine 11 is modified (N6-succinyllysine). N6-acetyllysine; alternate is present on lysine 16. Lysine 16 carries the N6-succinyllysine; alternate modification. At tyrosine 24 the chain carries Phosphotyrosine. The residue at position 35 (serine 35) is a Phosphoserine. Lysine 40 is subject to N6-succinyllysine. Residue serine 49 is modified to Phosphoserine. Histidine 58 is a binding site for O2. Histidine 87 contacts heme b. Serine 102 is modified (phosphoserine). Phosphothreonine is present on threonine 108. Residues serine 124 and serine 131 each carry the phosphoserine modification. Threonine 134 and threonine 137 each carry phosphothreonine. Phosphoserine is present on serine 138.

It belongs to the globin family. In terms of assembly, heterotetramer of two alpha chains and two beta chains. As to expression, red blood cells.

Its function is as follows. Involved in oxygen transport from the lung to the various peripheral tissues. Functionally, hemopressin acts as an antagonist peptide of the cannabinoid receptor CNR1. Hemopressin-binding efficiently blocks cannabinoid receptor CNR1 and subsequent signaling. The sequence is that of Hemoglobin subunit alpha (HBA) from Gorilla gorilla gorilla (Western lowland gorilla).